The chain runs to 214 residues: Probable transaldolase (214 aa).

K83 serves as the catalytic Schiff-base intermediate with substrate.

The protein belongs to the transaldolase family. Type 3B subfamily.

The protein resides in the cytoplasm. The catalysed reaction is D-sedoheptulose 7-phosphate + D-glyceraldehyde 3-phosphate = D-erythrose 4-phosphate + beta-D-fructose 6-phosphate. The protein operates within carbohydrate degradation; pentose phosphate pathway; D-glyceraldehyde 3-phosphate and beta-D-fructose 6-phosphate from D-ribose 5-phosphate and D-xylulose 5-phosphate (non-oxidative stage): step 2/3. Functionally, transaldolase is important for the balance of metabolites in the pentose-phosphate pathway. The polypeptide is Probable transaldolase (Desulfatibacillum aliphaticivorans).